We begin with the raw amino-acid sequence, 166 residues long: NAD(P)H-quinone oxidoreductase subunit I, chloroplastic (166 aa).

4Fe-4S ferredoxin-type domains lie at 55 to 84 and 95 to 124; these read GRIH…VDWK and LNYS…MTEE. [4Fe-4S] cluster is bound by residues Cys64, Cys67, Cys70, Cys74, Cys104, Cys107, Cys110, and Cys114.

Belongs to the complex I 23 kDa subunit family. In terms of assembly, NDH is composed of at least 16 different subunits, 5 of which are encoded in the nucleus. [4Fe-4S] cluster serves as cofactor.

The protein resides in the plastid. The protein localises to the chloroplast thylakoid membrane. The catalysed reaction is a plastoquinone + NADH + (n+1) H(+)(in) = a plastoquinol + NAD(+) + n H(+)(out). It carries out the reaction a plastoquinone + NADPH + (n+1) H(+)(in) = a plastoquinol + NADP(+) + n H(+)(out). In terms of biological role, NDH shuttles electrons from NAD(P)H:plastoquinone, via FMN and iron-sulfur (Fe-S) centers, to quinones in the photosynthetic chain and possibly in a chloroplast respiratory chain. The immediate electron acceptor for the enzyme in this species is believed to be plastoquinone. Couples the redox reaction to proton translocation, and thus conserves the redox energy in a proton gradient. The protein is NAD(P)H-quinone oxidoreductase subunit I, chloroplastic of Hofmeisteria fasciculata (Helogyne fasciculata).